A 101-amino-acid chain; its full sequence is MMLEHVLVLSAYLFSIGIYGLITSRNMVRALMCLELILNAVNMNLVTFSDLFDSRQLKGDIFSIFVIAIAAAEAAIGPAIVSSIYRNRKSTRINQSNLLNK.

Transmembrane regions (helical) follow at residues 2-22 (MLEHVLVLSAYLFSIGIYGLI), 32-52 (MCLELILNAVNMNLVTFSDLF), and 61-81 (IFSIFVIAIAAAEAAIGPAIV).

Belongs to the complex I subunit 4L family. As to quaternary structure, NDH is composed of at least 16 different subunits, 5 of which are encoded in the nucleus.

It localises to the plastid. The protein resides in the chloroplast thylakoid membrane. The enzyme catalyses a plastoquinone + NADH + (n+1) H(+)(in) = a plastoquinol + NAD(+) + n H(+)(out). It catalyses the reaction a plastoquinone + NADPH + (n+1) H(+)(in) = a plastoquinol + NADP(+) + n H(+)(out). NDH shuttles electrons from NAD(P)H:plastoquinone, via FMN and iron-sulfur (Fe-S) centers, to quinones in the photosynthetic chain and possibly in a chloroplast respiratory chain. The immediate electron acceptor for the enzyme in this species is believed to be plastoquinone. Couples the redox reaction to proton translocation, and thus conserves the redox energy in a proton gradient. The sequence is that of NAD(P)H-quinone oxidoreductase subunit 4L, chloroplastic from Nymphaea alba (White water-lily).